The primary structure comprises 332 residues: Tetraacyldisaccharide 4'-kinase (332 aa).

ATP is bound at residue 52-59 (TLGGAGKT).

It belongs to the LpxK family.

It catalyses the reaction a lipid A disaccharide + ATP = a lipid IVA + ADP + H(+). It functions in the pathway glycolipid biosynthesis; lipid IV(A) biosynthesis; lipid IV(A) from (3R)-3-hydroxytetradecanoyl-[acyl-carrier-protein] and UDP-N-acetyl-alpha-D-glucosamine: step 6/6. Functionally, transfers the gamma-phosphate of ATP to the 4'-position of a tetraacyldisaccharide 1-phosphate intermediate (termed DS-1-P) to form tetraacyldisaccharide 1,4'-bis-phosphate (lipid IVA). This chain is Tetraacyldisaccharide 4'-kinase, found in Methylobacterium sp. (strain 4-46).